We begin with the raw amino-acid sequence, 393 residues long: Dual specificity mitogen-activated protein kinase kinase 1 (393 aa).

A disordered region spans residues 1 to 27 (MPKKKPTPIQLNPAPDGSAVNGTSSAE). The region spanning 68–361 (FEKISELGAG…LKQLMVHAFI (294 aa)) is the Protein kinase domain. Residues 74-82 (LGAGNGGVV) and K97 contribute to the ATP site. The Proton acceptor role is filled by D190. A phosphoserine; by RAF mark is found at S218 and S222. The tract at residues 270-307 (ELELLFGCHVEGDAAETPPRPRTPGRPLSSYGMDSRPP) is RAF1-binding. The residue at position 286 (T286) is a Phosphothreonine. The residue at position 292 (T292) is a Phosphothreonine; by MAPK1. The residue at position 298 (S298) is a Phosphoserine; by PAK.

This sequence belongs to the protein kinase superfamily. STE Ser/Thr protein kinase family. MAP kinase kinase subfamily. In terms of assembly, found in a complex with at least BRAF, HRAS, MAP2K1, MAPK3/ERK1 and RGS14. Forms a heterodimer with MAP2K2/MEK2. Forms heterodimers with KSR2 which further dimerize to form tetramers. Interacts with KSR1 or KSR2 and BRAF; the interaction with KSR1 or KSR2 mediates KSR1-BRAF or KSR2-BRAF dimerization. Interacts with ARBB2, LAMTOR3, MAPK1/ERK2 and RAF1. Interacts with MAPK1/ERK2. Interacts with MORG1. Interacts with PPARG. Interacts with SGK1. Interacts with BIRC6/bruce. Interacts with KAT7; the interaction promotes KAT7 phosphorylation. Interacts with RAF1 and NEK10; the interaction is required for ERK1/2-signaling pathway activation in response to UV irradiation. Interacts with TRAF3IP3. Interacts with MOS. Post-translationally, phosphorylation at Ser-218 and Ser-222 by MAP kinase kinase kinases (BRAF or MEKK1) positively regulates kinase activity. Also phosphorylated at Thr-292 by MAPK1/ERK2 and at Ser-298 by PAK. MAPK1/ERK2 phosphorylation of Thr-292 occurs in response to cellular adhesion and leads to inhibition of Ser-298 phosphorylation by PAK. Autophosphorylated at Ser-218 and Ser-222, autophosphosphorylation is promoted by NEK10 following UV irradiation.

It is found in the cytoplasm. The protein localises to the cytoskeleton. It localises to the microtubule organizing center. Its subcellular location is the centrosome. The protein resides in the spindle pole body. It is found in the nucleus. The protein localises to the membrane. It catalyses the reaction L-seryl-[protein] + ATP = O-phospho-L-seryl-[protein] + ADP + H(+). It carries out the reaction L-threonyl-[protein] + ATP = O-phospho-L-threonyl-[protein] + ADP + H(+). The enzyme catalyses L-tyrosyl-[protein] + ATP = O-phospho-L-tyrosyl-[protein] + ADP + H(+). With respect to regulation, ras proteins such as HRAS mediate the activation of RAF proteins such as RAF1 or BRAF which in turn activate extracellular signal-regulated kinases (ERK) through MAPK (mitogen-activated protein kinases) and ERK kinases MAP2K1/MEK1 and MAP2K2/MEK2. Activation occurs through phosphorylation of Ser-218 and Ser-222. MAP2K1/MEK1 binds KSR1 or KSR2 releasing the inhibitory intramolecular interaction between KSR1 or KSR2 protein kinase and N-terminal domains. This allows KSR1 or KSR2 dimerization with BRAF leading to BRAF activation and phosphorylation of MAP2K1. MAP2K1/MEK1 is also the target of negative feed-back regulation by its substrate kinases, such as MAPK1/ERK2. These phosphorylate MAP2K1/MEK1 on Thr-292, thereby facilitating dephosphorylation of the activating residues Ser-218 and Ser-222. Inhibited by serine/threonine phosphatase 2A. Functionally, dual specificity protein kinase which acts as an essential component of the MAP kinase signal transduction pathway. Binding of extracellular ligands such as growth factors, cytokines and hormones to their cell-surface receptors activates RAS and this initiates RAF1 activation. RAF1 then further activates the dual-specificity protein kinases MAP2K1/MEK1 and MAP2K2/MEK2. Both MAP2K1/MEK1 and MAP2K2/MEK2 function specifically in the MAPK/ERK cascade, and catalyze the concomitant phosphorylation of a threonine and a tyrosine residue in a Thr-Glu-Tyr sequence located in the extracellular signal-regulated kinases MAPK3/ERK1 and MAPK1/ERK2, leading to their activation and further transduction of the signal within the MAPK/ERK cascade. Activates BRAF in a KSR1 or KSR2-dependent manner; by binding to KSR1 or KSR2 releases the inhibitory intramolecular interaction between KSR1 or KSR2 protein kinase and N-terminal domains which promotes KSR1 or KSR2-BRAF dimerization and BRAF activation. Depending on the cellular context, this pathway mediates diverse biological functions such as cell growth, adhesion, survival and differentiation, predominantly through the regulation of transcription, metabolism and cytoskeletal rearrangements. One target of the MAPK/ERK cascade is peroxisome proliferator-activated receptor gamma (PPARG), a nuclear receptor that promotes differentiation and apoptosis. MAP2K1/MEK1 has been shown to export PPARG from the nucleus. The MAPK/ERK cascade is also involved in the regulation of endosomal dynamics, including lysosome processing and endosome cycling through the perinuclear recycling compartment (PNRC), as well as in the fragmentation of the Golgi apparatus during mitosis. The sequence is that of Dual specificity mitogen-activated protein kinase kinase 1 (Map2k1) from Mus musculus (Mouse).